Reading from the N-terminus, the 513-residue chain is Bifunctional purine biosynthesis protein PurH (513 aa).

In terms of domain architecture, MGS-like spans 1–145 (MNKRAIISVY…KNFKYTTVIV (145 aa)).

It belongs to the PurH family.

It carries out the reaction (6R)-10-formyltetrahydrofolate + 5-amino-1-(5-phospho-beta-D-ribosyl)imidazole-4-carboxamide = 5-formamido-1-(5-phospho-D-ribosyl)imidazole-4-carboxamide + (6S)-5,6,7,8-tetrahydrofolate. The catalysed reaction is IMP + H2O = 5-formamido-1-(5-phospho-D-ribosyl)imidazole-4-carboxamide. It functions in the pathway purine metabolism; IMP biosynthesis via de novo pathway; 5-formamido-1-(5-phospho-D-ribosyl)imidazole-4-carboxamide from 5-amino-1-(5-phospho-D-ribosyl)imidazole-4-carboxamide (10-formyl THF route): step 1/1. It participates in purine metabolism; IMP biosynthesis via de novo pathway; IMP from 5-formamido-1-(5-phospho-D-ribosyl)imidazole-4-carboxamide: step 1/1. The chain is Bifunctional purine biosynthesis protein PurH from Caldicellulosiruptor bescii (strain ATCC BAA-1888 / DSM 6725 / KCTC 15123 / Z-1320) (Anaerocellum thermophilum).